Here is a 250-residue protein sequence, read N- to C-terminus: 5-oxoprolinase subunit A (250 aa).

It belongs to the LamB/PxpA family. In terms of assembly, forms a complex composed of PxpA, PxpB and PxpC.

The enzyme catalyses 5-oxo-L-proline + ATP + 2 H2O = L-glutamate + ADP + phosphate + H(+). Its function is as follows. Catalyzes the cleavage of 5-oxoproline to form L-glutamate coupled to the hydrolysis of ATP to ADP and inorganic phosphate. The protein is 5-oxoprolinase subunit A of Paraburkholderia phymatum (strain DSM 17167 / CIP 108236 / LMG 21445 / STM815) (Burkholderia phymatum).